The following is a 207-amino-acid chain: Riboflavin synthase (207 aa).

Lumazine-binding repeat units lie at residues 1 to 94 (MFTG…LGGH) and 95 to 191 (IVQG…INYL). 2,4-dihydroxypteridine is bound by residues 4–6 (GLV), 45–47 (CLT), 59–64 (DVSPET), 98–100 (GHV), Lys133, 142–144 (SLT), and 156–161 (NIIPHT).

Homotrimer.

It carries out the reaction 2 6,7-dimethyl-8-(1-D-ribityl)lumazine + H(+) = 5-amino-6-(D-ribitylamino)uracil + riboflavin. The protein operates within cofactor biosynthesis; riboflavin biosynthesis; riboflavin from 2-hydroxy-3-oxobutyl phosphate and 5-amino-6-(D-ribitylamino)uracil: step 2/2. In terms of biological role, catalyzes the dismutation of two molecules of 6,7-dimethyl-8-ribityllumazine, resulting in the formation of riboflavin and 5-amino-6-(D-ribitylamino)uracil. The polypeptide is Riboflavin synthase (ribE) (Aquifex aeolicus (strain VF5)).